Reading from the N-terminus, the 349-residue chain is B3 domain-containing protein At5g24050 (349 aa).

The TF-B3 DNA-binding region spans 240-341 (FNNLLRNDFL…ILCFAMEQSS (102 aa)).

It localises to the nucleus. This chain is B3 domain-containing protein At5g24050, found in Arabidopsis thaliana (Mouse-ear cress).